We begin with the raw amino-acid sequence, 279 residues long: Undecaprenyl-diphosphatase (279 aa).

The next 8 helical transmembrane spans lie at 17-37, 46-66, 92-112, 123-143, 156-176, 197-217, 226-246, and 257-277; these read TEFL…FFPF, AFED…VVVL, FQFY…GFLL, SDLL…MVFV, IGFK…IPGV, AEFS…YKLY, ETIG…YFII, and SFIS…LYFV.

This sequence belongs to the UppP family.

It localises to the cell inner membrane. The catalysed reaction is di-trans,octa-cis-undecaprenyl diphosphate + H2O = di-trans,octa-cis-undecaprenyl phosphate + phosphate + H(+). Catalyzes the dephosphorylation of undecaprenyl diphosphate (UPP). Confers resistance to bacitracin. The polypeptide is Undecaprenyl-diphosphatase (Leptospira biflexa serovar Patoc (strain Patoc 1 / ATCC 23582 / Paris)).